The sequence spans 319 residues: BTB/POZ domain-containing adapter for CUL3-mediated RhoA degradation protein 2 (319 aa).

The BTB domain maps to 31–99 (KYIRLNVGGC…LRDDTITLPK (69 aa)).

This sequence belongs to the BACURD family. Component of the BCR(TNFAIP1) E3 ubiquitin ligase complex, at least composed of cul3, tnfaip1/bacurd2 and rbx1.

It localises to the cytoplasm. The protein resides in the nucleus. Its subcellular location is the endosome. The protein operates within protein modification; protein ubiquitination. Its function is as follows. Substrate-specific adapter of a BCR (BTB-CUL3-RBX1) E3 ubiquitin-protein ligase complex involved in regulation of cytoskeleton structure. The BCR(TNFAIP1) E3 ubiquitin ligase complex mediates the ubiquitination of target proteins, leading to their degradation by the proteasome. This chain is BTB/POZ domain-containing adapter for CUL3-mediated RhoA degradation protein 2 (tnfaip1), found in Xenopus tropicalis (Western clawed frog).